Reading from the N-terminus, the 330-residue chain is T-cell leukemia homeobox protein 1 (330 aa).

Residues 186–207 (DRFTGHPYQNRTPPKKKKPRTS) form a disordered region. The homeobox DNA-binding region spans 201–260 (KKKPRTSFTRLQICELEKRFHRQKYLASAERAALAKALKMTDAQVKTWFQNRRTKWRRQT). At Lys236 the chain carries N6-acetyllysine.

As to quaternary structure, interacts with MEIS1, MEIS2, PBX1, PBX2 and PBX3.

Its subcellular location is the nucleus. Functionally, controls the genesis of the spleen. Binds to the DNA sequence 5'-GGCGGTAAGTGG-3'. This is T-cell leukemia homeobox protein 1 (TLX1) from Homo sapiens (Human).